Reading from the N-terminus, the 180-residue chain is Decaprenylphosphoryl-5-phosphoribose phosphatase (180 aa).

4 helical membrane passes run 31–51 (ALSH…AGAL), 61–81 (LAVG…KRVV), 116–136 (VLLA…PMAL), and 139–159 (LVLG…GALV).

Belongs to the PA-phosphatase related phosphoesterase family.

Its subcellular location is the cell membrane. It carries out the reaction trans,octa-cis-decaprenylphospho-beta-D-ribofuranose 5-phosphate + H2O = trans,octa-cis-decaprenylphospho-beta-D-ribofuranose + phosphate. It participates in cell wall biogenesis; cell wall polysaccharide biosynthesis. In terms of biological role, phosphatase involved in the biosynthesis of decaprenylphosphoryl arabinose (DPA), which serves as the arabinose donor for the biosynthesis of arabinogalactan, the major mycobacterial cell wall polysaccharide. Catalyzes the dephosphorylation of decaprenylphosphoryl-5-phosphoribose (DPPR) to decaprenyl-phosphoribose (DPR). This Mycolicibacterium smegmatis (strain ATCC 700084 / mc(2)155) (Mycobacterium smegmatis) protein is Decaprenylphosphoryl-5-phosphoribose phosphatase.